We begin with the raw amino-acid sequence, 87 residues long: Large ribosomal subunit protein bL27 (87 aa).

Belongs to the bacterial ribosomal protein bL27 family.

This Stenotrophomonas maltophilia (strain K279a) protein is Large ribosomal subunit protein bL27.